We begin with the raw amino-acid sequence, 165 residues long: Urease accessory protein UreE (165 aa).

It belongs to the UreE family.

It is found in the cytoplasm. Functionally, involved in urease metallocenter assembly. Binds nickel. Probably functions as a nickel donor during metallocenter assembly. This Micrococcus luteus (strain ATCC 4698 / DSM 20030 / JCM 1464 / CCM 169 / CCUG 5858 / IAM 1056 / NBRC 3333 / NCIMB 9278 / NCTC 2665 / VKM Ac-2230) (Micrococcus lysodeikticus) protein is Urease accessory protein UreE.